A 192-amino-acid polypeptide reads, in one-letter code: Urease accessory protein UreE (192 aa).

Residues 170–192 (EHHGHSHSHSHDHVHDEKCGHKH) form a disordered region. The span at 178-192 (HSHDHVHDEKCGHKH) shows a compositional bias: basic and acidic residues.

It belongs to the UreE family.

Its subcellular location is the cytoplasm. Functionally, involved in urease metallocenter assembly. Binds nickel. Probably functions as a nickel donor during metallocenter assembly. The sequence is that of Urease accessory protein UreE from Cupriavidus necator (strain ATCC 17699 / DSM 428 / KCTC 22496 / NCIMB 10442 / H16 / Stanier 337) (Ralstonia eutropha).